The primary structure comprises 348 residues: Lipopolysaccharide heptosyltransferase 2 (348 aa).

This sequence belongs to the glycosyltransferase 9 family.

It catalyses the reaction an L-alpha-D-Hep-(1-&gt;5)-[alpha-Kdo-(2-&gt;4)]-alpha-Kdo-(2-&gt;6)-lipid A + ADP-L-glycero-beta-D-manno-heptose = an L-alpha-D-Hep-(1-&gt;3)-L-alpha-D-Hep-(1-&gt;5)-[alpha-Kdo-(2-&gt;4)]-alpha-Kdo-(2-&gt;6)-lipid A + ADP + H(+). The catalysed reaction is L-alpha-D-Hep-(1-&gt;5)-[alpha-Kdo-(2-&gt;4)]-alpha-Kdo-(2-&gt;6)-lipid A (E. coli) + ADP-L-glycero-beta-D-manno-heptose = L-alpha-D-Hep-(1-&gt;3)-L-alpha-D-Hep-(1-&gt;5)-[alpha-Kdo-(2-&gt;4)]-alpha-Kdo-(2-&gt;6)-lipid A (E. coli) + ADP + H(+). Its pathway is bacterial outer membrane biogenesis; LPS core biosynthesis. Functionally, glycosyltransferase involved in the biosynthesis of the core oligosaccharide region of lipopolysaccharide (LPS). Catalyzes the addition of the second heptose unit to the heptosyl-Kdo2-lipid A module. The analog ADP-mannose can serve as an alternative donor in place of ADP-L-glycero-D-manno-heptose, but with lower efficiency. The chain is Lipopolysaccharide heptosyltransferase 2 from Escherichia coli (strain K12).